Consider the following 497-residue polypeptide: Aspartyl/glutamyl-tRNA(Asn/Gln) amidotransferase subunit B (497 aa).

It belongs to the GatB/GatE family. GatB subfamily. In terms of assembly, heterotrimer of A, B and C subunits.

The enzyme catalyses L-glutamyl-tRNA(Gln) + L-glutamine + ATP + H2O = L-glutaminyl-tRNA(Gln) + L-glutamate + ADP + phosphate + H(+). It carries out the reaction L-aspartyl-tRNA(Asn) + L-glutamine + ATP + H2O = L-asparaginyl-tRNA(Asn) + L-glutamate + ADP + phosphate + 2 H(+). In terms of biological role, allows the formation of correctly charged Asn-tRNA(Asn) or Gln-tRNA(Gln) through the transamidation of misacylated Asp-tRNA(Asn) or Glu-tRNA(Gln) in organisms which lack either or both of asparaginyl-tRNA or glutaminyl-tRNA synthetases. The reaction takes place in the presence of glutamine and ATP through an activated phospho-Asp-tRNA(Asn) or phospho-Glu-tRNA(Gln). The chain is Aspartyl/glutamyl-tRNA(Asn/Gln) amidotransferase subunit B from Novosphingobium aromaticivorans (strain ATCC 700278 / DSM 12444 / CCUG 56034 / CIP 105152 / NBRC 16084 / F199).